The following is a 333-amino-acid chain: Gap junction alpha-4 protein (333 aa).

Topologically, residues 1–20 (MGDWGFLEKLLDQVQEHSTV) are cytoplasmic. The helical transmembrane segment at 21-40 (VGKIWLTVLFIFRILILGLA) threads the bilayer. The Extracellular portion of the chain corresponds to 41 to 76 (GESVWGDEQSDFECNTAQPGCTNVCYDQAFPISHIR). The chain crosses the membrane as a helical span at residues 77-99 (YWVLQFLFVSTPTLIYLGHVIYL). The Cytoplasmic portion of the chain corresponds to 100–148 (SRREERLRQKEGELRALPSKDPHVERALAAIEHQMAKISVAEDGRLRIR). Residues 149–171 (GALMGTYVISVLCKSVLEAGFLY) traverse the membrane as a helical segment. The Extracellular portion of the chain corresponds to 172–208 (GQWRLYGWTMEPVFVCQRAPCPHVVDCYVSRPTEKTI). The helical transmembrane segment at 209–231 (FIIFMLVVGVISLVLNLLELVHL) threads the bilayer. The Cytoplasmic portion of the chain corresponds to 232–333 (LCRCVSREIK…NSSASKKQYV (102 aa)). The segment at 292 to 333 (ANLTTEERLTSTRPPPFVNAAPQGGQKSSSRPNSSASKKQYV) is disordered. The span at 318 to 333 (KSSSRPNSSASKKQYV) shows a compositional bias: low complexity.

It belongs to the connexin family. Alpha-type (group II) subfamily. In terms of assembly, a connexon is composed of a hexamer of connexins. As to expression, highly expressed in lung.

The protein localises to the cell membrane. It localises to the cell junction. Its subcellular location is the gap junction. In terms of biological role, one gap junction consists of a cluster of closely packed pairs of transmembrane channels, the connexons, through which materials of low MW diffuse from one cell to a neighboring cell. The polypeptide is Gap junction alpha-4 protein (Gja4) (Rattus norvegicus (Rat)).